Reading from the N-terminus, the 394-residue chain is Protein TsgA homolog (394 aa).

The next 12 membrane-spanning stretches (helical) occupy residues 11–31 (WISFFSYALTGAVVIVTGMVL), 51–71 (FLNAGILLAVFLNAWLMEIVP), 76–96 (LIFGFVLMVLAVLGLMNSHSL), 101–121 (LCMFVLGVVSGITMSIGTFLI), 135–155 (LFTDSFFSMAGTLFPIIAAAI), 163–183 (YWVYACIGVIYVAIFILALCF), 205–225 (LGVALLAVAALCYILGQLGFI), 245–265 (SVVGYFWTAYMIGMWAFSAIL), 273–293 (IVTALALASTLLMYWFINTTD), 299–319 (WIIMGLGFFSSAIYTTIITLG), 333–353 (FILTCGTIGTMLTFVVTGPIV), and 362–382 (LATTNSLYAVVFLMCLLLGFV).

Belongs to the major facilitator superfamily. TsgA family.

It localises to the cell inner membrane. The protein is Protein TsgA homolog of Erwinia tasmaniensis (strain DSM 17950 / CFBP 7177 / CIP 109463 / NCPPB 4357 / Et1/99).